The chain runs to 478 residues: Septin-4 (478 aa).

2 disordered regions span residues 40 to 74 (DFSG…LYDD) and 87 to 115 (ADNQ…LDPY). Residues 95-108 (APAPLSPSARPRSP) are compositionally biased toward low complexity. 2 positions are modified to phosphoserine: Ser117 and Ser118. The region spanning 141–414 (KGFDFTLMVA…ENYRAQCIQS (274 aa)) is the Septin-type G domain. The tract at residues 151 to 158 (GESGLGKS) is G1 motif. GTP is bound by residues 151 to 158 (GESGLGKS) and Thr185. The segment at 208–211 (DTPG) is G3 motif. Residues 289–292 (AKAD) form a G4 motif region. 290-298 (KADTLTPPE) is a GTP binding site. Ser325 is subject to Phosphoserine. GTP is bound by residues Gly348 and Arg363. The tract at residues 428-448 (LTRESGTDFPIPAVPPGTDPE) is disordered. The residue at position 432 (Ser432) is a Phosphoserine. Phosphothreonine is present on Thr434. The stretch at 446–478 (DPETEKLIREKDEELRRMQEILHKIQKQMKETY) forms a coiled coil.

It belongs to the TRAFAC class TrmE-Era-EngA-EngB-Septin-like GTPase superfamily. Septin GTPase family. In terms of assembly, septins polymerize into heterooligomeric protein complexes that form filaments, and can associate with cellular membranes, actin filaments and microtubules. GTPase activity is required for filament formation. Interacts with SEPTIN8. Component of a septin core octameric complex consisting of SEPTIN12, SEPTIN7, SEPTIN6 and SEPTIN2 or SEPTIN4 in the order 12-7-6-2-2-6-7-12 or 12-7-6-4-4-6-7-12. Interacts with SEPTIN14 (via C-terminus). Interacts with DYRK1A. Interacts with SLC6A3/DAT and SNCA/alpha-synuclein. Interacts with STX1A; in the striatum. Interacts with XIAP (via BIR3 domain) following the induction of apoptosis. Interacts with AREL1 (via HECT domain); in the cytoplasm following induction of apoptosis. In terms of processing, ubiquitinated by AREL1. Post-translationally, phosphorylated by DYRK1A.

The protein localises to the cytoplasm. The protein resides in the cell projection. Its subcellular location is the cilium. It is found in the flagellum. It localises to the cytoplasmic vesicle. The protein localises to the secretory vesicle. The protein resides in the axon. Its subcellular location is the dendrite. It is found in the perikaryon. It localises to the synapse. In terms of biological role, filament-forming cytoskeletal GTPase. Pro-apoptotic protein involved in LGR5-positive intestinal stem cell and Paneth cell expansion in the intestines, via its interaction with XIAP. May also play a role in the regulation of cell fate in the intestine. Positive regulator of apoptosis involved in hematopoietic stem cell homeostasis; via its interaction with XIAP. Negative regulator of repair and hair follicle regeneration in response to injury, due to inhibition of hair follicle stem cell proliferation, potentially via its interaction with XIAP. Plays an important role in male fertility and sperm motility. During spermiogenesis, essential for the establishment of the annulus (a fibrous ring structure connecting the midpiece and the principal piece of the sperm flagellum) which is a requisite for the structural and mechanical integrity of the sperm. Involved in the migration of cortical neurons and the formation of neuron leading processes during embryonic development. Required for dopaminergic metabolism in presynaptic autoreceptors; potentially via activity as a presynaptic scaffold protein. This Macaca fascicularis (Crab-eating macaque) protein is Septin-4.